Consider the following 554-residue polypeptide: Probable urocanate hydratase (554 aa).

Residues 49-50 (GG), Q127, E194, 240-241 (NA), 261-265 (QTAAH), 271-272 (YI), and Y320 each bind NAD(+). Residue C408 is part of the active site. G490 contacts NAD(+).

This sequence belongs to the urocanase family. NAD(+) serves as cofactor.

It is found in the cytoplasm. It carries out the reaction 4-imidazolone-5-propanoate = trans-urocanate + H2O. Its pathway is amino-acid degradation; L-histidine degradation into L-glutamate; N-formimidoyl-L-glutamate from L-histidine: step 2/3. Catalyzes the conversion of urocanate to 4-imidazolone-5-propionate. In Thermoplasma acidophilum (strain ATCC 25905 / DSM 1728 / JCM 9062 / NBRC 15155 / AMRC-C165), this protein is Probable urocanate hydratase.